The chain runs to 119 residues: V-type proton ATPase subunit F (119 aa).

It belongs to the V-ATPase F subunit family. In terms of assembly, V-ATPase is a heteromultimeric enzyme made up of two complexes: the ATP-hydrolytic V1 complex and the proton translocation V0 complex. The V1 complex consists of three catalytic AB heterodimers that form a heterohexamer, three peripheral stalks each consisting of EG heterodimers, one central rotor including subunits D and F, and the regulatory subunits C and H. The proton translocation complex V0 consists of the proton transport subunit a, a ring of proteolipid subunits c9c'', rotary subunit d, subunits e and f, and the accessory subunits ATP6AP1/Ac45 and ATP6AP2/PRR.

Its subcellular location is the cytoplasmic vesicle. It localises to the secretory vesicle. The protein resides in the synaptic vesicle membrane. The protein localises to the clathrin-coated vesicle membrane. Subunit of the V1 complex of vacuolar(H+)-ATPase (V-ATPase), a multisubunit enzyme composed of a peripheral complex (V1) that hydrolyzes ATP and a membrane integral complex (V0) that translocates protons. V-ATPase is responsible for acidifying and maintaining the pH of intracellular compartments and in some cell types, is targeted to the plasma membrane, where it is responsible for acidifying the extracellular environment. The sequence is that of V-type proton ATPase subunit F (ATP6V1F) from Homo sapiens (Human).